The following is a 784-amino-acid chain: LPS-assembly protein LptD (784 aa).

The signal sequence occupies residues 1 to 24; that stretch reads MKKRIPTLLATMIATALYSQQGLA. 2 disulfides stabilise this stretch: Cys-31–Cys-724 and Cys-173–Cys-725.

It belongs to the LptD family. In terms of assembly, component of the lipopolysaccharide transport and assembly complex. Interacts with LptE and LptA. May interact with LptE during assembly of LptD by the beta-barrel assembly machine (BAM). Also interacts with LptM, which promotes the efficient assembly of the LptDE translocon by the BAM complex. Contains two intramolecular disulfide bonds. At least one disulfide bond is required for activity, and protein is probably fully oxidized in vivo.

It localises to the cell outer membrane. In terms of biological role, together with LptE, is involved in the assembly of lipopolysaccharide (LPS) at the surface of the outer membrane. Contributes to n-hexane resistance. The polypeptide is LPS-assembly protein LptD (Escherichia coli (strain K12)).